Consider the following 637-residue polypeptide: Chaperone protein HtpG (637 aa).

Positions 1–345 (MTAAQKETLG…SNDLPLNVSR (345 aa)) are a; substrate-binding. The interval 346 to 562 (EILQDNKVTQ…DNDMSSQMQK (217 aa)) is b. The interval 563-637 (LMESVGQAAP…LNKLMLELSK (75 aa)) is c.

The protein belongs to the heat shock protein 90 family. In terms of assembly, homodimer.

It localises to the cytoplasm. Its function is as follows. Molecular chaperone. Has ATPase activity. In Pseudoalteromonas translucida (strain TAC 125), this protein is Chaperone protein HtpG.